Reading from the N-terminus, the 250-residue chain is Small ribosomal subunit protein uS3 (250 aa).

Residues 39-107 (VREFLTKKLK…PAQVSINEID (69 aa)) form the KH type-2 domain. The segment at 215–250 (MNPAPAEERPAKRGRGRGEGQERRGRRGDRAADKGE) is disordered. Residues 220–250 (AEERPAKRGRGRGEGQERRGRRGDRAADKGE) show a composition bias toward basic and acidic residues.

It belongs to the universal ribosomal protein uS3 family. As to quaternary structure, part of the 30S ribosomal subunit. Forms a tight complex with proteins S10 and S14.

Its function is as follows. Binds the lower part of the 30S subunit head. Binds mRNA in the 70S ribosome, positioning it for translation. The polypeptide is Small ribosomal subunit protein uS3 (Acinetobacter baumannii (strain AB307-0294)).